The sequence spans 242 residues: Spiralin (242 aa).

The signal sequence occupies residues 1–23 (MKKLLSILAVFGVSAVGTTSVVA). Residue Cys24 is the site of N-palmitoyl cysteine attachment. Cys24 carries S-diacylglycerol cysteine lipidation.

The protein belongs to the spiralin family. Seems to occur as dimer, tetramers, and large oligomers of identical chains. Post-translationally, palmitate and stearate are the major lipid components.

It is found in the cell membrane. Major membrane protein of spiroplasma. The protein is Spiralin (spi) of Spiroplasma melliferum.